We begin with the raw amino-acid sequence, 97 residues long: Citrate lyase acyl carrier protein (97 aa).

Position 14 is an O-(phosphoribosyl dephospho-coenzyme A)serine (Ser-14).

Belongs to the CitD family. As to quaternary structure, oligomer with a subunit composition of (alpha,beta,gamma)6.

The protein localises to the cytoplasm. Functionally, covalent carrier of the coenzyme of citrate lyase. The protein is Citrate lyase acyl carrier protein of Enterobacter sp. (strain 638).